We begin with the raw amino-acid sequence, 334 residues long: GTP 3',8-cyclase (334 aa).

The 226-residue stretch at 11 to 236 folds into the Radical SAM core domain; the sequence is GFNRKIDYLR…ESTESSQGPA (226 aa). Residue Arg20 participates in GTP binding. [4Fe-4S] cluster-binding residues include Cys27 and Cys31. An S-adenosyl-L-methionine-binding site is contributed by Tyr33. Cys34 is a binding site for [4Fe-4S] cluster. Arg69 is a binding site for GTP. An S-adenosyl-L-methionine-binding site is contributed by Gly73. Residue Thr100 coordinates GTP. Residue Ser124 coordinates S-adenosyl-L-methionine. Residue Lys161 coordinates GTP. Met195 contacts S-adenosyl-L-methionine. Cys260 and Cys263 together coordinate [4Fe-4S] cluster. 265 to 267 lines the GTP pocket; that stretch reads RVR. [4Fe-4S] cluster is bound at residue Cys277.

Belongs to the radical SAM superfamily. MoaA family. Monomer and homodimer. [4Fe-4S] cluster is required as a cofactor.

It catalyses the reaction GTP + AH2 + S-adenosyl-L-methionine = (8S)-3',8-cyclo-7,8-dihydroguanosine 5'-triphosphate + 5'-deoxyadenosine + L-methionine + A + H(+). Its pathway is cofactor biosynthesis; molybdopterin biosynthesis. Its function is as follows. Catalyzes the cyclization of GTP to (8S)-3',8-cyclo-7,8-dihydroguanosine 5'-triphosphate. In Pseudomonas putida (strain GB-1), this protein is GTP 3',8-cyclase.